The following is a 535-amino-acid chain: CTP synthase (535 aa).

Residues 1–266 (MKFVVITGGV…GDYICERLGL (266 aa)) are amidoligase domain. Residue Ser12 coordinates CTP. Ser12 lines the UTP pocket. Residues 13 to 18 (GIGKGI) and Asp70 contribute to the ATP site. Mg(2+) is bound by residues Asp70 and Glu140. CTP contacts are provided by residues 147–149 (DIE), 187–192 (KTKPTQ), and Lys223. Residues 187–192 (KTKPTQ) and Lys223 each bind UTP. Positions 291–535 (RIAVVGKYVD…IKAAAGQGPD (245 aa)) constitute a Glutamine amidotransferase type-1 domain. Gly355 provides a ligand contact to L-glutamine. The Nucleophile; for glutamine hydrolysis role is filled by Cys382. L-glutamine contacts are provided by residues 383–386 (LGFQ), Glu406, and Arg464. Catalysis depends on residues His508 and Glu510.

The protein belongs to the CTP synthase family. As to quaternary structure, homotetramer.

It carries out the reaction UTP + L-glutamine + ATP + H2O = CTP + L-glutamate + ADP + phosphate + 2 H(+). The catalysed reaction is L-glutamine + H2O = L-glutamate + NH4(+). It catalyses the reaction UTP + NH4(+) + ATP = CTP + ADP + phosphate + 2 H(+). It participates in pyrimidine metabolism; CTP biosynthesis via de novo pathway; CTP from UDP: step 2/2. With respect to regulation, allosterically activated by GTP, when glutamine is the substrate; GTP has no effect on the reaction when ammonia is the substrate. The allosteric effector GTP functions by stabilizing the protein conformation that binds the tetrahedral intermediate(s) formed during glutamine hydrolysis. Inhibited by the product CTP, via allosteric rather than competitive inhibition. Functionally, catalyzes the ATP-dependent amination of UTP to CTP with either L-glutamine or ammonia as the source of nitrogen. Regulates intracellular CTP levels through interactions with the four ribonucleotide triphosphates. The chain is CTP synthase from Methanopyrus kandleri (strain AV19 / DSM 6324 / JCM 9639 / NBRC 100938).